Reading from the N-terminus, the 331-residue chain is uncharacterized protein (331 aa).

Gly-43–Ser-50 provides a ligand contact to ATP.

This is an uncharacterized protein from Methanocaldococcus jannaschii (strain ATCC 43067 / DSM 2661 / JAL-1 / JCM 10045 / NBRC 100440) (Methanococcus jannaschii).